We begin with the raw amino-acid sequence, 210 residues long: Tumor protein D53 homolog (210 aa).

Positions 22–73 form a coiled coil; it reads VTDVDFTSMISEEEKEELKAELAKLEDEISTLRQVLAAKEKHLIEIKQKLGM. Polar residues predominate over residues 185–197; the sequence is SSTAHASAQSSLA. The tract at residues 185 to 210 is disordered; that stretch reads SSTAHASAQSSLAGTRLPESEEELQC.

The protein belongs to the TPD52 family. Forms a homodimer or heterodimer with other members of the family.

In Gallus gallus (Chicken), this protein is Tumor protein D53 homolog (TPD52L1).